The chain runs to 172 residues: Endoribonuclease YbeY (172 aa).

Positions 136, 140, and 146 each coordinate Zn(2+).

Belongs to the endoribonuclease YbeY family. Zn(2+) is required as a cofactor.

It localises to the cytoplasm. Its function is as follows. Single strand-specific metallo-endoribonuclease involved in late-stage 70S ribosome quality control and in maturation of the 3' terminus of the 16S rRNA. This chain is Endoribonuclease YbeY, found in Rickettsia canadensis (strain McKiel).